The primary structure comprises 97 residues: Integration host factor subunit alpha (97 aa).

Belongs to the bacterial histone-like protein family. In terms of assembly, heterodimer of an alpha and a beta chain.

Its function is as follows. This protein is one of the two subunits of integration host factor, a specific DNA-binding protein that functions in genetic recombination as well as in transcriptional and translational control. This chain is Integration host factor subunit alpha, found in Colwellia psychrerythraea (strain 34H / ATCC BAA-681) (Vibrio psychroerythus).